The primary structure comprises 618 residues: 1-deoxy-D-xylulose-5-phosphate synthase (618 aa).

Residues His70 and 111 to 113 each bind thiamine diphosphate; that span reads GHS. Asp142 serves as a coordination point for Mg(2+). Thiamine diphosphate is bound by residues 143 to 144, Asn171, Tyr278, and Glu360; that span reads GS. Mg(2+) is bound at residue Asn171.

It belongs to the transketolase family. DXPS subfamily. As to quaternary structure, homodimer. Requires Mg(2+) as cofactor. It depends on thiamine diphosphate as a cofactor.

It catalyses the reaction D-glyceraldehyde 3-phosphate + pyruvate + H(+) = 1-deoxy-D-xylulose 5-phosphate + CO2. It participates in metabolic intermediate biosynthesis; 1-deoxy-D-xylulose 5-phosphate biosynthesis; 1-deoxy-D-xylulose 5-phosphate from D-glyceraldehyde 3-phosphate and pyruvate: step 1/1. In terms of biological role, catalyzes the acyloin condensation reaction between C atoms 2 and 3 of pyruvate and glyceraldehyde 3-phosphate to yield 1-deoxy-D-xylulose-5-phosphate (DXP). The polypeptide is 1-deoxy-D-xylulose-5-phosphate synthase (Helicobacter pylori (strain J99 / ATCC 700824) (Campylobacter pylori J99)).